A 39-amino-acid chain; its full sequence is Large ribosomal subunit protein bL12 (39 aa).

The protein belongs to the bacterial ribosomal protein bL12 family. Homodimer. Part of the ribosomal stalk of the 50S ribosomal subunit. Forms a multimeric L10(L12)X complex, where L10 forms an elongated spine to which 2 to 4 L12 dimers bind in a sequential fashion. Binds GTP-bound translation factors.

In terms of biological role, forms part of the ribosomal stalk which helps the ribosome interact with GTP-bound translation factors. Is thus essential for accurate translation. In Arthrobacter glacialis, this protein is Large ribosomal subunit protein bL12 (rplL).